We begin with the raw amino-acid sequence, 90 residues long: Putative F-box protein At5g16285 (90 aa).

Positions 1 to 46 (MRIESLLQHDVVERILERLAVNSLPRFKAVSKQWKSTIESQFFQGK) constitute an F-box domain.

This chain is Putative F-box protein At5g16285, found in Arabidopsis thaliana (Mouse-ear cress).